The primary structure comprises 189 residues: Adenylate kinase (189 aa).

Residue Gly11–Thr16 participates in ATP binding. An NMP region spans residues Ser31–Ile60. AMP is bound by residues Thr32, Arg37, Gln58–Ile60, Gly86–Arg89, and Gln93. An LID region spans residues Lys127–Asp137. Residue Arg128 participates in ATP binding. The AMP site is built by Arg134 and Arg145. Gly173 lines the ATP pocket.

It belongs to the adenylate kinase family. Monomer.

The protein localises to the cytoplasm. It carries out the reaction AMP + ATP = 2 ADP. The protein operates within purine metabolism; AMP biosynthesis via salvage pathway; AMP from ADP: step 1/1. Functionally, catalyzes the reversible transfer of the terminal phosphate group between ATP and AMP. Plays an important role in cellular energy homeostasis and in adenine nucleotide metabolism. The protein is Adenylate kinase of Bacteroides fragilis (strain ATCC 25285 / DSM 2151 / CCUG 4856 / JCM 11019 / LMG 10263 / NCTC 9343 / Onslow / VPI 2553 / EN-2).